Consider the following 203-residue polypeptide: Glycerol-3-phosphate acyltransferase (203 aa).

4 consecutive transmembrane segments (helical) span residues Leu6–Val26, Ala82–Phe102, Ala118–Ile138, and Tyr141–Asp161.

This sequence belongs to the PlsY family. In terms of assembly, probably interacts with PlsX.

It is found in the cell inner membrane. It carries out the reaction an acyl phosphate + sn-glycerol 3-phosphate = a 1-acyl-sn-glycero-3-phosphate + phosphate. The protein operates within lipid metabolism; phospholipid metabolism. In terms of biological role, catalyzes the transfer of an acyl group from acyl-phosphate (acyl-PO(4)) to glycerol-3-phosphate (G3P) to form lysophosphatidic acid (LPA). This enzyme utilizes acyl-phosphate as fatty acyl donor, but not acyl-CoA or acyl-ACP. The sequence is that of Glycerol-3-phosphate acyltransferase from Shewanella sp. (strain MR-4).